A 462-amino-acid chain; its full sequence is CD-NTase-associated protein 4 (462 aa).

The interval 1 to 226 (MSASLLEKQS…FENFICHALE (226 aa)) is N-terminal endonuclease domain. Active-site residues include Asp50, Glu67, and Lys69. Asp50 lines the Mg(2+) pocket. The segment at 235-462 (DPIKINLSAS…QYIPTAELNL (228 aa)) is C-terminal SAVED domain. Residues 299–301 (KQR), Trp449, and Tyr454 each bind 2',3',3'-c-tri-AMP.

This sequence belongs to the Cap4 nuclease family. As to quaternary structure, a monomer in the absence of ligand, in its presence it forms oligomers. The cofactor is a divalent metal cation.

With respect to regulation, DNase activity is activated upon ligand binding. Inhibited by EDTA. In terms of biological role, effector DNase of a CBASS antivirus system. CBASS (cyclic oligonucleotide-based antiphage signaling system) provides immunity against bacteriophage. The CD-NTase protein synthesizes cyclic nucleotides in response to infection; these serve as specific second messenger signals. The signals activate a diverse range of effectors, leading to bacterial cell death and thus abortive phage infection. A type II-C(AAAA) CBASS system. Its function is as follows. Binds cyclic nucleotide second messengers (synthesized by CdnD, the cognate CD-NTase in the CBASS operon). Ligand binding activates it to endonucleolytically degrade dsDNA to approximately 6 bp length fragments, with a preference for 5'-C or 5'-G cleavage site. The minor product of CdnD is the activating nucleotide; also binds the major product (2',3',3'-cyclic AMP-AMP-AMP) but is not activated by it. Only binds DNA in the presence of ligand. Is not activated by c-di-AMP, c-di-GMP, 3'3'-cyclic GMP-AMP (3'3'-cGAMP) or 3',3',3'-cyclic AMP-AMP-GMP. The protein is CD-NTase-associated protein 4 of Acinetobacter sp. (strain ATCC 27244 / 9458).